A 265-amino-acid polypeptide reads, in one-letter code: Secreted RxLR effector protein 16 (265 aa).

A signal peptide spans 1 to 19 (MRGAFYIAIALLIVRSRTA). A RxLR-dEER motif is present at residues 46–61 (RYLRGGLALSATNEER). N-linked (GlcNAc...) asparagine glycosylation is found at asparagine 170, asparagine 219, and asparagine 240.

This sequence belongs to the RxLR effector family. N-glycosylated. The putative N-glycosylation site at position 240 is essential for cell death-inducing activity.

The protein resides in the secreted. It is found in the host nucleus. In terms of biological role, effector that acts as an elicitor that induces cell death and promotes ROS accumulation in Nicotian benthamiana. RxLR16-triggered cell death is dependent on SGT1, HSP90 and RAR1, but independent of the somatic embryogenesis receptor-like kinase SERK3/BAK1, indicating that it acts independently of the detection of cell surface pattern recognition receptors. Enhances the expressional levels of defense-associated genes involved in the salicylic acid-, jasmonate acid-, and ethylene-mediated signal transduction, resulting in disease resistance. However, as some other Plasmopara viticola RxLR effectors including RxLR1, RxLR10, RxLR30 and RxLR25, can suppress defense responses and disease resistance induced by RxLR16, it may not trigger host cell death or immune responses during physiological infection under natural conditions. The polypeptide is Secreted RxLR effector protein 16 (Plasmopara viticola (Downy mildew of grapevine)).